We begin with the raw amino-acid sequence, 274 residues long: Protein LIKE COV 3 (274 aa).

Residues 1–60 (METRERDLERLIPMHKSGASPRDVVLSVPPSPLASPIHVAGKEAIYKVIRSWASKKFMTG) are Cytoplasmic-facing. Residues 61-81 (CVILLPIAVTFYFTWWFIHFV) traverse the membrane as a helical segment. Residues 82 to 93 (DGFFSPIYTHLG) are Extracellular-facing. The chain crosses the membrane as a helical span at residues 94 to 114 (INMFGLGFVTSITFIFMVGVF). Residues 115–274 (MSSWLGASVL…VCLSLVLAWT (160 aa)) lie on the Cytoplasmic side of the membrane.

The protein belongs to the plant COV1 protein family.

Its subcellular location is the membrane. This Arabidopsis thaliana (Mouse-ear cress) protein is Protein LIKE COV 3.